We begin with the raw amino-acid sequence, 333 residues long: Ribosomal RNA small subunit methyltransferase H (333 aa).

Residues 31-33 (GGY), aspartate 49, phenylalanine 76, aspartate 134, and glutamine 141 each bind S-adenosyl-L-methionine.

Belongs to the methyltransferase superfamily. RsmH family.

The protein resides in the cytoplasm. The catalysed reaction is cytidine(1402) in 16S rRNA + S-adenosyl-L-methionine = N(4)-methylcytidine(1402) in 16S rRNA + S-adenosyl-L-homocysteine + H(+). Its function is as follows. Specifically methylates the N4 position of cytidine in position 1402 (C1402) of 16S rRNA. The protein is Ribosomal RNA small subunit methyltransferase H of Wolbachia sp. subsp. Brugia malayi (strain TRS).